A 141-amino-acid polypeptide reads, in one-letter code: Large ribosomal subunit protein uL11 (141 aa).

This sequence belongs to the universal ribosomal protein uL11 family. In terms of assembly, part of the ribosomal stalk of the 50S ribosomal subunit. Interacts with L10 and the large rRNA to form the base of the stalk. L10 forms an elongated spine to which L12 dimers bind in a sequential fashion forming a multimeric L10(L12)X complex. One or more lysine residues are methylated.

Functionally, forms part of the ribosomal stalk which helps the ribosome interact with GTP-bound translation factors. The protein is Large ribosomal subunit protein uL11 of Campylobacter jejuni subsp. jejuni serotype O:6 (strain 81116 / NCTC 11828).